A 520-amino-acid polypeptide reads, in one-letter code: Retinoic acid receptor RXR-beta (520 aa).

The tract at residues 1 to 167 (MSWATRPPFL…GGSGPPEDVK (167 aa)) is disordered. The modulating stretch occupies residues 1-191 (MSWATRPPFL…PGGPGAGKRL (191 aa)). Position 25 is an omega-N-methylarginine (R25). Positions 64-79 (EAGRDGMGDSGRDSRS) are enriched in basic and acidic residues. Pro residues predominate over residues 95–118 (SSPPGPPLTPSAPPPPMPPPPLGS). The span at 119 to 130 (PFPVISSSMGSP) shows a compositional bias: low complexity. Residues 131 to 140 (GLPPPAPPGF) show a composition bias toward pro residues. NR C4-type zinc fingers lie at residues 192-212 (CAIC…CEGC) and 228-252 (CRDN…YQKC). A DNA-binding region (nuclear receptor) is located at residues 192-257 (CAICGDRSSG…RYQKCLATGM (66 aa)). The tract at residues 258–382 (KREAVQEERQ…HRSIDVRDGI (125 aa)) is hinge. The span at 263–275 (QEERQRGKDKDGD) shows a compositional bias: basic and acidic residues. 2 disordered regions span residues 263 to 285 (QEER…APEE) and 300 to 323 (QKSD…NDPV). The region spanning 283–516 (PEEMPVDRIL…TFLMEMLEAP (234 aa)) is the NR LBD domain. The segment covering 307 to 317 (EGPGATGGGGS) has biased composition (gly residues).

This sequence belongs to the nuclear hormone receptor family. NR2 subfamily. Homodimer (in vitro). Heterodimer with other retinoic acid receptor family members. Binds DNA preferentially as a RAR/RXR heterodimer. Interacts with NR1H3. Interacts with AKAP13. In terms of tissue distribution, in all tissues tested, including brain, thymus, spleen and liver.

It is found in the nucleus. The protein resides in the cytoplasm. Receptor for retinoic acid. Retinoic acid receptors bind as heterodimers to their target response elements in response to their ligands, all-trans or 9-cis retinoic acid, and regulate gene expression in various biological processes. The RAR/RXR heterodimers bind to the retinoic acid response elements (RARE). This chain is Retinoic acid receptor RXR-beta (Rxrb), found in Mus musculus (Mouse).